We begin with the raw amino-acid sequence, 201 residues long: Small ribosomal subunit protein uS4c (201 aa).

The S4 RNA-binding domain occupies Met90 to Leu153.

The protein belongs to the universal ribosomal protein uS4 family. In terms of assembly, part of the 30S ribosomal subunit. Contacts protein S5. The interaction surface between S4 and S5 is involved in control of translational fidelity.

It is found in the plastid. The protein resides in the chloroplast. In terms of biological role, one of the primary rRNA binding proteins, it binds directly to 16S rRNA where it nucleates assembly of the body of the 30S subunit. With S5 and S12 plays an important role in translational accuracy. The polypeptide is Small ribosomal subunit protein uS4c (rps4) (Gracilaria tenuistipitata var. liui (Red alga)).